The following is a 283-amino-acid chain: Chromatin modification-related protein png1 (283 aa).

Low complexity predominate over residues 137 to 171; sequence YSPSGASSARQTPAPSRSGASTAGRRRTSATTRGA. Residues 137–224 form a disordered region; sequence YSPSGASSAR…NEMVSEEDME (88 aa). A compositionally biased stretch (polar residues) spans 181–216; sequence YTASLADSGSTRGQKVSNATATTQLETKADSTTPNE. The PHD-type zinc finger occupies 228 to 277; it reads EKYCFCQQGSYGQMVACDNANCEREWFHMECVGLKAPPEGTWYCEACRDQ. Zn(2+) is bound by residues cysteine 231, cysteine 233, cysteine 244, cysteine 249, histidine 255, cysteine 258, cysteine 271, and cysteine 274.

This sequence belongs to the ING family. Interacts with H3K4me3 and to a lesser extent with H3K4me2. Component of a histone deacetylase complex.

It localises to the nucleus. Component of a histone deacetylase complex responsible for the deacetylation of lysine residues on the N-terminal part of the core histones (H2A, H2B, H3 and H4). Histone deacetylation gives a tag for epigenetic repression and plays an important role in transcriptional regulation, cell cycle progression and developmental events. Has a role in silencing of mating type genes. The sequence is that of Chromatin modification-related protein png1 (png1) from Schizosaccharomyces pombe (strain 972 / ATCC 24843) (Fission yeast).